The primary structure comprises 209 residues: J domain-containing protein spf31 (209 aa).

Residues 31-96 form the J domain; sequence NAYDVLDILP…KIRESLDSAY (66 aa). Disordered regions lie at residues 149-175 and 187-209; these read ANQQ…EKVW and QDFL…RVLG. Basic and acidic residues predominate over residues 154–175; it reads EQARQDEIARERKRRVESEKVW. Residues 192–209 are compositionally biased toward basic residues; it reads KTKKNNLKKKNKKPRVLG.

The protein is J domain-containing protein spf31 (spf31) of Schizosaccharomyces pombe (strain 972 / ATCC 24843) (Fission yeast).